We begin with the raw amino-acid sequence, 596 residues long: Chaperonin 60 subunit beta 2, chloroplastic (596 aa).

Residues 1–50 (MASTFTATSSLGSLLAPNAIKLSSATSISSSSFGRRHNVCVRRSRPAIVC) constitute a chloroplast transit peptide. 2 positions are modified to phosphoserine: Ser-97 and Ser-474. A coiled-coil region spans residues 388–489 (TQEAVNKRVV…KDTLENDEEK (102 aa)).

Belongs to the chaperonin (HSP60) family. In terms of assembly, part of the Cpn60 complex composed of 7 alpha and 7 beta subunits. Can also form a complex composed of 14 beta subunits only. Both complexes show ATPase activity. The Cpn60 complex interacts with the Cpn10 complex. Interacts with RAB during heat stress.

It is found in the plastid. The protein resides in the chloroplast stroma. In terms of biological role, involved in protein assisted folding. In Arabidopsis thaliana (Mouse-ear cress), this protein is Chaperonin 60 subunit beta 2, chloroplastic (CPN60B2).